The primary structure comprises 141 residues: Small ribosomal subunit protein uS12 (141 aa).

Polar residues predominate over residues 1–11 (MPTISQLVTTS). The interval 1–22 (MPTISQLVTTSRQDKNYKSKSP) is disordered. Asp-102 carries the post-translational modification 3-methylthioaspartic acid.

The protein belongs to the universal ribosomal protein uS12 family. In terms of assembly, part of the 30S ribosomal subunit. Contacts proteins S8 and S17. May interact with IF1 in the 30S initiation complex.

With S4 and S5 plays an important role in translational accuracy. Functionally, interacts with and stabilizes bases of the 16S rRNA that are involved in tRNA selection in the A site and with the mRNA backbone. Located at the interface of the 30S and 50S subunits, it traverses the body of the 30S subunit contacting proteins on the other side and probably holding the rRNA structure together. The combined cluster of proteins S8, S12 and S17 appears to hold together the shoulder and platform of the 30S subunit. The polypeptide is Small ribosomal subunit protein uS12 (Acholeplasma laidlawii (strain PG-8A)).